Here is a 462-residue protein sequence, read N- to C-terminus: Argininosuccinate lyase (462 aa).

It belongs to the lyase 1 family. Argininosuccinate lyase subfamily.

The protein localises to the cytoplasm. The catalysed reaction is 2-(N(omega)-L-arginino)succinate = fumarate + L-arginine. It participates in amino-acid biosynthesis; L-arginine biosynthesis; L-arginine from L-ornithine and carbamoyl phosphate: step 3/3. The chain is Argininosuccinate lyase from Xanthobacter autotrophicus (strain ATCC BAA-1158 / Py2).